The sequence spans 359 residues: CMP-N-acetylneuraminate-poly-alpha-2,8-sialyltransferase (359 aa).

The Cytoplasmic segment spans residues 1–7 (MRSIRKR). The helical; Signal-anchor for type II membrane protein transmembrane segment at 8-20 (WTICTISLLLIFY) threads the bilayer. The Lumenal portion of the chain corresponds to 21–359 (KTKEIARTEE…KLTTGKCVKQ (339 aa)). Residues Asn50, Asn74, and Asn119 are each glycosylated (N-linked (GlcNAc...) asparagine). 2 cysteine pairs are disulfide-bonded: Cys142-Cys292 and Cys156-Cys356. Asn147 and Asn170 together coordinate CMP-N-acetyl-beta-neuraminate. N-linked (GlcNAc...) asparagine glycans are attached at residues Asn204 and Asn219. Positions 279, 280, 281, and 301 each coordinate CMP-N-acetyl-beta-neuraminate. His331 (proton donor/acceptor) is an active-site residue.

This sequence belongs to the glycosyltransferase 29 family. In terms of processing, autopolysialylated.

The protein localises to the golgi apparatus membrane. The protein resides in the secreted. It carries out the reaction [N-acetyl-alpha-D-neuraminosyl-(2-&gt;8)](n) + CMP-N-acetyl-beta-neuraminate = [N-acetyl-alpha-D-neuraminosyl-(2-&gt;8)](n+1) + CMP + H(+). Its function is as follows. Catalyzes the transfer of a sialic acid from a CMP-linked sialic acid donor onto a terminal alpha-2,3-, alpha-2,6-, or alpha-2,8-linked sialic acid of an N-linked glycan protein acceptor through alpha-2,8-linkages. Therefore, participates in polysialic acid synthesis on various sialylated N-acetyllactosaminyl oligosaccharides, including NCAM1 N-glycans, FETUB N-glycans and AHSG. It is noteworthy that alpha-2,3-linked sialic acid is apparently a better acceptor than alpha-2,6-linked sialic acid. The protein is CMP-N-acetylneuraminate-poly-alpha-2,8-sialyltransferase (ST8SIA4) of Pan troglodytes (Chimpanzee).